The following is a 410-amino-acid chain: F-box protein At5g36730 (410 aa).

The F-box domain maps to M1–L46.

This is F-box protein At5g36730 from Arabidopsis thaliana (Mouse-ear cress).